A 395-amino-acid polypeptide reads, in one-letter code: tRNA (guanine-N(7)-)-methyltransferase (395 aa).

Residues E126, E151, and D178 each contribute to the S-adenosyl-L-methionine site. K204 and D234 together coordinate substrate.

It belongs to the class I-like SAM-binding methyltransferase superfamily. TrmB family.

It carries out the reaction guanosine(46) in tRNA + S-adenosyl-L-methionine = N(7)-methylguanosine(46) in tRNA + S-adenosyl-L-homocysteine. Its pathway is tRNA modification; N(7)-methylguanine-tRNA biosynthesis. In terms of biological role, catalyzes the formation of N(7)-methylguanine at position 46 (m7G46) in tRNA. The chain is tRNA (guanine-N(7)-)-methyltransferase from Campylobacter fetus subsp. fetus (strain 82-40).